The following is a 481-amino-acid chain: Serine--tRNA ligase (481 aa).

284 to 286 (TAE) lines the L-serine pocket. 315-317 (RAE) lines the ATP pocket. Position 338 (Glu-338) interacts with L-serine. 405–408 (EISS) provides a ligand contact to ATP. Ser-440 lines the L-serine pocket.

It belongs to the class-II aminoacyl-tRNA synthetase family. Type-1 seryl-tRNA synthetase subfamily. Homodimer. The tRNA molecule binds across the dimer.

Its subcellular location is the cytoplasm. The enzyme catalyses tRNA(Ser) + L-serine + ATP = L-seryl-tRNA(Ser) + AMP + diphosphate + H(+). The catalysed reaction is tRNA(Sec) + L-serine + ATP = L-seryl-tRNA(Sec) + AMP + diphosphate + H(+). It participates in aminoacyl-tRNA biosynthesis; selenocysteinyl-tRNA(Sec) biosynthesis; L-seryl-tRNA(Sec) from L-serine and tRNA(Sec): step 1/1. Its function is as follows. Catalyzes the attachment of serine to tRNA(Ser). Is also able to aminoacylate tRNA(Sec) with serine, to form the misacylated tRNA L-seryl-tRNA(Sec), which will be further converted into selenocysteinyl-tRNA(Sec). The polypeptide is Serine--tRNA ligase (Rhodopseudomonas palustris (strain BisB18)).